Here is a 297-residue protein sequence, read N- to C-terminus: Lipoprotein NlpD/LppB homolog (297 aa).

An N-terminal signal peptide occupies residues 1-22 (MDKGEGLRLAATLRQWTRLYGG). Cysteine 23 carries N-palmitoyl cysteine lipidation. Residue cysteine 23 is the site of S-diacylglycerol cysteine attachment. The 45-residue stretch at 67 to 111 (GQYIVRRGDTLYSIAFRFGWDWKALAARNGIAPPYTIQVGQAIQF) folds into the LysM domain. Positions 134–168 (TKPTPVPPAVSTSVPAKPAPAPASTTTPPSSGATP) are disordered.

The protein belongs to the E.coli NlpD/Haemophilus LppB family.

It localises to the cell inner membrane. This Pseudomonas aeruginosa (strain ATCC 15692 / DSM 22644 / CIP 104116 / JCM 14847 / LMG 12228 / 1C / PRS 101 / PAO1) protein is Lipoprotein NlpD/LppB homolog.